We begin with the raw amino-acid sequence, 129 residues long: Small ribosomal subunit protein uS11 (129 aa).

Belongs to the universal ribosomal protein uS11 family. As to quaternary structure, part of the 30S ribosomal subunit. Interacts with proteins S7 and S18. Binds to IF-3.

Its function is as follows. Located on the platform of the 30S subunit, it bridges several disparate RNA helices of the 16S rRNA. Forms part of the Shine-Dalgarno cleft in the 70S ribosome. The chain is Small ribosomal subunit protein uS11 from Mycoplasma mycoides subsp. mycoides SC (strain CCUG 32753 / NCTC 10114 / PG1).